The chain runs to 394 residues: DNA repair protein brc-2 (394 aa).

Basic and acidic residues predominate over residues 1–12 (MGDSSKKVKDSF). Disordered stretches follow at residues 1 to 30 (MGDS…VPIS) and 56 to 136 (MLNS…EKKK). The interval 1–60 (MGDSSKKVKDSFDTISEPDSFDEPKGVPISMEPVFSTAAGIRIDVKQESIDKSKKMLNSD) is interaction with rad-51. The tract at residues 28-62 (PISMEPVFSTAAGIRIDVKQESIDKSKKMLNSDLK) is BRCA2 repeat-like region. Low complexity predominate over residues 56–73 (MLNSDLKSKSSSKGGFSS). Residues 60–89 (DLKSKSSSKGGFSSPLVRKNNGSSAFVSPF) form an interaction with rad-51-DNA complexes region. Positions 124–134 (KKSKKHSKKEK) are enriched in basic residues. Positions 371–389 (WKDFGSYLKHKEDKKKRRS) are required for ssDNA binding.

As to quaternary structure, interacts (via N-terminus) with rad-51; regulates rad-51 recruitment to sites of DNA double strand breaks. In terms of tissue distribution, expressed in the germline, with highest expression in cells undergoing oogenesis.

The protein localises to the nucleus. It is found in the chromosome. Required for the homologous recombination repair of DNA double strand breaks, thereby playing a role in chromosome integrity. Acts by targeting rad-51 to sites of DNA damage and stabilizing rad-51-DNA filaments by blocking ATP hydrolysis catalyzed by rad-51. Promotes rad-51 mediated displacement-loop (D-loop) formation during strand invasion between the invading single-stranded DNA (ssDNA) and the homologous duplex DNA. Also functions independently of rad-51 in DNA double-strand break (DSB) repair by promoting DNA single-strand annealing (SSA) when the homologous recombination (HR) and non-homologous end joining (NHEJ) pathways are compromised. Binds selectively to single-stranded (ssDNA) via its C-terminus. Involved in telomere maintenance and replicative senescence. This is DNA repair protein brc-2 from Caenorhabditis elegans.